Reading from the N-terminus, the 363-residue chain is UDP-N-acetylglucosamine--N-acetylmuramyl-(pentapeptide) pyrophosphoryl-undecaprenol N-acetylglucosamine transferase (363 aa).

Residues 14–16 (TGG), Arg171, Ser200, and Gln290 each bind UDP-N-acetyl-alpha-D-glucosamine.

The protein belongs to the glycosyltransferase 28 family. MurG subfamily.

It is found in the cell inner membrane. The catalysed reaction is di-trans,octa-cis-undecaprenyl diphospho-N-acetyl-alpha-D-muramoyl-L-alanyl-D-glutamyl-meso-2,6-diaminopimeloyl-D-alanyl-D-alanine + UDP-N-acetyl-alpha-D-glucosamine = di-trans,octa-cis-undecaprenyl diphospho-[N-acetyl-alpha-D-glucosaminyl-(1-&gt;4)]-N-acetyl-alpha-D-muramoyl-L-alanyl-D-glutamyl-meso-2,6-diaminopimeloyl-D-alanyl-D-alanine + UDP + H(+). Its pathway is cell wall biogenesis; peptidoglycan biosynthesis. Functionally, cell wall formation. Catalyzes the transfer of a GlcNAc subunit on undecaprenyl-pyrophosphoryl-MurNAc-pentapeptide (lipid intermediate I) to form undecaprenyl-pyrophosphoryl-MurNAc-(pentapeptide)GlcNAc (lipid intermediate II). In Borrelia garinii subsp. bavariensis (strain ATCC BAA-2496 / DSM 23469 / PBi) (Borreliella bavariensis), this protein is UDP-N-acetylglucosamine--N-acetylmuramyl-(pentapeptide) pyrophosphoryl-undecaprenol N-acetylglucosamine transferase.